We begin with the raw amino-acid sequence, 305 residues long: Homoserine kinase (305 aa).

An ATP-binding site is contributed by 90–100; sequence PLARGLGSSAS.

It belongs to the GHMP kinase family. Homoserine kinase subfamily.

It localises to the cytoplasm. It catalyses the reaction L-homoserine + ATP = O-phospho-L-homoserine + ADP + H(+). It functions in the pathway amino-acid biosynthesis; L-threonine biosynthesis; L-threonine from L-aspartate: step 4/5. Its function is as follows. Catalyzes the ATP-dependent phosphorylation of L-homoserine to L-homoserine phosphate. This chain is Homoserine kinase, found in Staphylococcus haemolyticus (strain JCSC1435).